A 297-amino-acid chain; its full sequence is tRNA pseudouridine synthase B (297 aa).

D41 functions as the Nucleophile in the catalytic mechanism.

Belongs to the pseudouridine synthase TruB family. Type 1 subfamily.

The catalysed reaction is uridine(55) in tRNA = pseudouridine(55) in tRNA. In terms of biological role, responsible for synthesis of pseudouridine from uracil-55 in the psi GC loop of transfer RNAs. This Synechococcus sp. (strain CC9311) protein is tRNA pseudouridine synthase B.